A 550-amino-acid polypeptide reads, in one-letter code: Chaperonin GroEL (550 aa).

ATP-binding positions include 30–33, Lys51, 87–91, Gly414, and Asp494; these read TLGP and DGTTT.

This sequence belongs to the chaperonin (HSP60) family. In terms of assembly, forms a cylinder of 14 subunits composed of two heptameric rings stacked back-to-back. Interacts with the co-chaperonin GroES.

It localises to the cytoplasm. The catalysed reaction is ATP + H2O + a folded polypeptide = ADP + phosphate + an unfolded polypeptide.. Functionally, together with its co-chaperonin GroES, plays an essential role in assisting protein folding. The GroEL-GroES system forms a nano-cage that allows encapsulation of the non-native substrate proteins and provides a physical environment optimized to promote and accelerate protein folding. This is Chaperonin GroEL from Buchnera aphidicola subsp. Thelaxes suberi.